A 78-amino-acid polypeptide reads, in one-letter code: Acyl carrier protein (78 aa).

A Carrier domain is found at 4-78 (AEIKDKVYDI…QQAIDYIVKK (75 aa)). O-(pantetheine 4'-phosphoryl)serine is present on serine 39.

It belongs to the acyl carrier protein (ACP) family. 4'-phosphopantetheine is transferred from CoA to a specific serine of apo-ACP by AcpS. This modification is essential for activity because fatty acids are bound in thioester linkage to the sulfhydryl of the prosthetic group.

The protein localises to the cytoplasm. It functions in the pathway lipid metabolism; fatty acid biosynthesis. Functionally, carrier of the growing fatty acid chain in fatty acid biosynthesis. The sequence is that of Acyl carrier protein from Chlorobium limicola (strain DSM 245 / NBRC 103803 / 6330).